The primary structure comprises 536 residues: SNW domain-containing protein 1 (536 aa).

The tract at residues 1-46 is disordered; the sequence is MALTSFLPAPTQLSQDQLEAEEKARSQRSRQTSLVSSRREPPPYGY. Ala2 carries the post-translational modification N-acetylalanine. Ser14 carries the post-translational modification Phosphoserine. Residue Lys23 forms a Glycyl lysine isopeptide (Lys-Gly) (interchain with G-Cter in SUMO2) linkage. The segment at 59-79 is interaction with PPIL1; the sequence is GDGGAFPEIHVAQYPLDMGRK. Residues Lys81, Lys97, Lys115, Lys122, Lys141, Lys158, and Lys170 each participate in a glycyl lysine isopeptide (Lys-Gly) (interchain with G-Cter in SUMO2) cross-link. An SNW region spans residues 174 to 339; that stretch reads AQYIRYTPSQ…KARERRAGIK (166 aa). Residues Ser182 and Ser190 each carry the phosphoserine modification. Lys193 participates in a covalent cross-link: Glycyl lysine isopeptide (Lys-Gly) (interchain with G-Cter in SUMO2). The disordered stretch occupies residues 209 to 233; the sequence is PPRFKINKKIPRGPPSPPAPVMHSP. Residues Ser224, Ser232, and Ser234 each carry the phosphoserine modification. Glycyl lysine isopeptide (Lys-Gly) (interchain with G-Cter in SUMO2) cross-links involve residues Lys240, Lys258, Lys286, Lys339, Lys344, Lys416, Lys441, and Lys452. A disordered region spans residues 311–386; sequence KMAQKEKEKH…RSKLQRNENR (76 aa). Composition is skewed to basic and acidic residues over residues 472–489 and 503–530; these read FVPD…RGRE and KFLE…EHEG. Positions 472 to 536 are disordered; it reads FVPDKEFSGS…EHEGKKRRKE (65 aa). Residues Ser479 and Ser481 each carry the phosphoserine modification. Residue Lys509 forms a Glycyl lysine isopeptide (Lys-Gly) (interchain with G-Cter in SUMO2) linkage.

It belongs to the SNW family. As to quaternary structure, identified in the spliceosome C complex. Associates with U4/U6-U5 tri-small nuclear ribonucleoproteins (U4/U6-U5 tri-snRNPs). Component of the minor spliceosome, which splices U12-type introns. Interacts with SKI, SMAD2,SMAD3, RBPJ, RB1, PABPN1, MAGEA1, SIRT1, FOXN3, U2AF2, PPIL1, DAXX and ATP1B4. Interacts with VDR and RXRA; preferentially associates with VDR:RXRA heterodimers. Interacts with NCOR2. Interacts with MAML1. Interacts with NOTCH1 NICD; the interaction involves multimerized NOTCH1 NICD. Forms a complex with NOTCH1 NICD and MAML1; the association is dissociated by RBPJ. Associates with positive transcription elongation factor b (P-TEFb). Component of the SNARP complex which consists at least of SNIP1, SNW1, THRAP3, BCLAF1 and PNN.

Its subcellular location is the nucleus. In terms of biological role, involved in pre-mRNA splicing as component of the spliceosome. As a component of the minor spliceosome, involved in the splicing of U12-type introns in pre-mRNAs. Required in the specific splicing of CDKN1A pre-mRNA; the function probably involves the recruitment of U2AF2 to the mRNA. May recruit PPIL1 to the spliceosome. May be involved in cyclin-D1/CCND1 mRNA stability through the SNARP complex which associates with both the 3'end of the CCND1 gene and its mRNA. Involved in transcriptional regulation. Modulates TGF-beta-mediated transcription via association with SMAD proteins, MYOD1-mediated transcription via association with PABPN1, RB1-mediated transcriptional repression, and retinoid-X receptor (RXR)- and vitamin D receptor (VDR)-dependent gene transcription in a cell line-specific manner probably involving coactivators NCOA1 and GRIP1. Is involved in NOTCH1-mediated transcriptional activation. Binds to multimerized forms of Notch intracellular domain (NICD) and is proposed to recruit transcriptional coactivators such as MAML1 to form an intermediate preactivation complex which associates with DNA-bound CBF-1/RBPJ to form a transcriptional activation complex by releasing SNW1 and redundant NOTCH1 NICD. The polypeptide is SNW domain-containing protein 1 (SNW1) (Bos taurus (Bovine)).